Here is a 138-residue protein sequence, read N- to C-terminus: NADH-quinone oxidoreductase subunit A 1 (138 aa).

The next 3 helical transmembrane spans lie at 19–39 (FLPL…LLLA), 74–94 (FYLI…IFAW), and 103–123 (LAGL…LVWL).

This sequence belongs to the complex I subunit 3 family. NDH-1 is composed of 14 different subunits. Subunits NuoA, H, J, K, L, M, N constitute the membrane sector of the complex.

It is found in the cell inner membrane. It catalyses the reaction a quinone + NADH + 5 H(+)(in) = a quinol + NAD(+) + 4 H(+)(out). NDH-1 shuttles electrons from NADH, via FMN and iron-sulfur (Fe-S) centers, to quinones in the respiratory chain. The immediate electron acceptor for the enzyme in this species is believed to be ubiquinone. Couples the redox reaction to proton translocation (for every two electrons transferred, four hydrogen ions are translocated across the cytoplasmic membrane), and thus conserves the redox energy in a proton gradient. This chain is NADH-quinone oxidoreductase subunit A 1, found in Geobacter metallireducens (strain ATCC 53774 / DSM 7210 / GS-15).